The sequence spans 456 residues: CBL-interacting protein kinase 9 (456 aa).

In terms of domain architecture, Protein kinase spans 27–282 (YELGKTIGEG…IAQILEDDWF (256 aa)). Residues 33-41 (IGEGSFAKV) and lysine 56 contribute to the ATP site. The active-site Proton acceptor is aspartate 150. The tract at residues 168 to 197 (DFGLSAFAPQTKEDGLLHTACGTPNYVAPE) is activation loop. Residues 318-343 (REKPESMNAFALISRSQGFNLGNLFE) form the NAF domain. Positions 351–380 (KRETSFTSQCTPQEIMSKIEEACGPLGFNV) are PPI.

It belongs to the protein kinase superfamily. CAMK Ser/Thr protein kinase family. SNF1 subfamily. It depends on Mn(2+) as a cofactor.

The catalysed reaction is L-seryl-[protein] + ATP = O-phospho-L-seryl-[protein] + ADP + H(+). It catalyses the reaction L-threonyl-[protein] + ATP = O-phospho-L-threonyl-[protein] + ADP + H(+). Functionally, CIPK serine-threonine protein kinases interact with CBL proteins. Binding of a CBL protein to the regulatory NAF domain of CIPK protein lead to the activation of the kinase in a calcium-dependent manner. The protein is CBL-interacting protein kinase 9 (CIPK9) of Oryza sativa subsp. japonica (Rice).